Here is a 243-residue protein sequence, read N- to C-terminus: Probable transcriptional regulatory protein Bpet3099 (243 aa).

Residues 1 to 21 (MAGHSKWANIQHRKGRQDAKR) form a disordered region.

This sequence belongs to the TACO1 family.

It is found in the cytoplasm. This is Probable transcriptional regulatory protein Bpet3099 from Bordetella petrii (strain ATCC BAA-461 / DSM 12804 / CCUG 43448).